The primary structure comprises 951 residues: 2-oxoglutarate dehydrogenase E1 component (951 aa).

Positions 906 to 925 are disordered; that stretch reads RRRRSSPAEGNPTAHKQEQA.

Belongs to the alpha-ketoglutarate dehydrogenase family. In terms of assembly, homodimer. Part of the 2-oxoglutarate dehydrogenase (OGDH) complex composed of E1 (2-oxoglutarate dehydrogenase), E2 (dihydrolipoamide succinyltransferase) and E3 (dihydrolipoamide dehydrogenase); the complex contains multiple copies of the three enzymatic components (E1, E2 and E3). Thiamine diphosphate is required as a cofactor.

The catalysed reaction is N(6)-[(R)-lipoyl]-L-lysyl-[protein] + 2-oxoglutarate + H(+) = N(6)-[(R)-S(8)-succinyldihydrolipoyl]-L-lysyl-[protein] + CO2. E1 component of the 2-oxoglutarate dehydrogenase (OGDH) complex which catalyzes the decarboxylation of 2-oxoglutarate, the first step in the conversion of 2-oxoglutarate to succinyl-CoA and CO(2). The sequence is that of 2-oxoglutarate dehydrogenase E1 component from Exiguobacterium sp. (strain ATCC BAA-1283 / AT1b).